A 779-amino-acid polypeptide reads, in one-letter code: Beta-galactosidase 15 (779 aa).

Residues 1 to 19 form the signal peptide; that stretch reads MVSLSFILCCVLVSSCAYA. N148 is a glycosylation site (N-linked (GlcNAc...) asparagine). Residue E178 is the Proton donor of the active site. The Nucleophile role is filled by E247. Residues N248, N345, N374, N489, N495, and N555 are each glycosylated (N-linked (GlcNAc...) asparagine). The region spanning 694 to 779 is the SUEL-type lectin domain; that stretch reads VYEKNVLELS…AKRLAVEAIC (86 aa).

This sequence belongs to the glycosyl hydrolase 35 family. As to expression, ubiquitous, with higher levels in roots and siliques.

It localises to the secreted. The protein localises to the extracellular space. Its subcellular location is the apoplast. The enzyme catalyses Hydrolysis of terminal non-reducing beta-D-galactose residues in beta-D-galactosides.. This Arabidopsis thaliana (Mouse-ear cress) protein is Beta-galactosidase 15 (BGAL15).